A 376-amino-acid chain; its full sequence is Putative peptide import ATP-binding protein BMEII0205 (376 aa).

The interval 1 to 25 (MPLRPALHLRTGKLRQTPTHNEPDG) is disordered. The ABC transporter domain occupies 64–314 (VRTDDLVRDF…PLHPYSRALL (251 aa)). 106-113 (GESGSGKS) contributes to the ATP binding site.

The protein belongs to the ABC transporter superfamily. As to quaternary structure, the complex is composed of two ATP-binding proteins (BMEII0205 and BMEII0206), two transmembrane proteins (BMEII0207/BMEII0208 and BMEII0209) and a solute-binding protein (BMEII0210).

The protein localises to the cell inner membrane. In terms of biological role, probably part of an ABC transporter complex that could be involved in peptide import. Probably responsible for energy coupling to the transport system. This chain is Putative peptide import ATP-binding protein BMEII0205, found in Brucella melitensis biotype 1 (strain ATCC 23456 / CCUG 17765 / NCTC 10094 / 16M).